Here is an 81-residue protein sequence, read N- to C-terminus: Apolipoprotein C-I, acidic form (81 aa).

The N-terminal stretch at 1–24 (MRLFLSLLVVVLSIVLEGPTPAQG) is a signal peptide.

The protein belongs to the apolipoprotein C1 family.

It is found in the secreted. The chain is Apolipoprotein C-I, acidic form (APOC1A) from Cercocebus atys (Sooty mangabey).